The chain runs to 299 residues: Putative pyrroline-5-carboxylate reductase 4 (299 aa).

The protein belongs to the pyrroline-5-carboxylate reductase family.

It carries out the reaction L-proline + NADP(+) = (S)-1-pyrroline-5-carboxylate + NADPH + 2 H(+). The catalysed reaction is L-proline + NAD(+) = (S)-1-pyrroline-5-carboxylate + NADH + 2 H(+). It participates in amino-acid biosynthesis; L-proline biosynthesis; L-proline from L-glutamate 5-semialdehyde: step 1/1. The polypeptide is Putative pyrroline-5-carboxylate reductase 4 (Caenorhabditis elegans).